Reading from the N-terminus, the 161-residue chain is Urease accessory protein UreE (161 aa).

The tract at residues 133–161 (EPEAGAYQSAPHSHSHAHDHPFVRLPAHS) is disordered.

The protein belongs to the UreE family.

Its subcellular location is the cytoplasm. Its function is as follows. Involved in urease metallocenter assembly. Binds nickel. Probably functions as a nickel donor during metallocenter assembly. This is Urease accessory protein UreE from Pseudomonas putida (strain W619).